Consider the following 372-residue polypeptide: Tribbles homolog 1 (372 aa).

Disordered stretches follow at residues 1–23 (MRVGPVRSAMSGASQPRGPALLF) and 52–86 (ECSSPPDYLSPPGSPCSPQPPPAAPGAGGGSGSAP). Residues 59-75 (YLSPPGSPCSPQPPPAA) are compositionally biased toward pro residues. The region spanning 91-338 (IADYLLLPLA…APEILLHPWF (248 aa)) is the Protein kinase domain. The COP1-binding motif lies at 355 to 360 (DQIVPE).

This sequence belongs to the protein kinase superfamily. CAMK Ser/Thr protein kinase family. Tribbles subfamily. Monomer. Interacts (via protein kinase domain) with CEBPA. Interacts with COP1. As to expression, expressed in most human tissues with the highest levels in skeletal muscle, thyroid gland, pancreas, peripheral blood leukocytes, and bone marrow.

Its function is as follows. Adapter protein involved in protein degradation by interacting with COP1 ubiquitin ligase. The COP1-binding motif is masked by autoinhibitory interactions with the protein kinase domain. Serves to alter COP1 substrate specificity by directing the activity of COP1 toward CEBPA. Binds selectively the recognition sequence of CEBPA. Regulates myeloid cell differentiation by altering the expression of CEBPA in a COP1-dependent manner. Controls macrophage, eosinophil and neutrophil differentiation via the COP1-binding domain. Interacts with MAPK kinases and regulates activation of MAP kinases, but has no kinase activity. The chain is Tribbles homolog 1 from Homo sapiens (Human).